A 170-amino-acid polypeptide reads, in one-letter code: Protein SOB FIVE-LIKE 5 (170 aa).

Positions 10–15 match the SOFL-A motif; that stretch reads SGWTLY. The disordered stretch occupies residues 17 to 78; the sequence is DQSVSSPSPS…GPRNISEEDS (62 aa). Basic and acidic residues predominate over residues 35–44; sequence DSRRRSKDSW. The short motif at 61–70 is the SOFL-B element; that stretch reads SMISDASSGP. Residues 79–86 carry the Nuclear localization signal motif; the sequence is VKKINIVG.

This sequence belongs to the SOFL plant protein family. Expressed in seedlings, roots, flowers and siliques. Barely detectable in leaves.

The protein localises to the cytoplasm. It localises to the nucleus. In terms of biological role, involved in cytokinin-mediated development. This is Protein SOB FIVE-LIKE 5 from Arabidopsis thaliana (Mouse-ear cress).